Here is a 1217-residue protein sequence, read N- to C-terminus: DNA-directed RNA polymerase subunit beta' (1217 aa).

Zn(2+) contacts are provided by Cys-60, Cys-62, Cys-75, and Cys-78. The Mg(2+) site is built by Asp-449, Asp-451, and Asp-453. 4 residues coordinate Zn(2+): Cys-821, Cys-895, Cys-902, and Cys-905.

Belongs to the RNA polymerase beta' chain family. The RNAP catalytic core consists of 2 alpha, 1 beta, 1 beta' and 1 omega subunit. When a sigma factor is associated with the core the holoenzyme is formed, which can initiate transcription. Mg(2+) is required as a cofactor. The cofactor is Zn(2+).

The enzyme catalyses RNA(n) + a ribonucleoside 5'-triphosphate = RNA(n+1) + diphosphate. DNA-dependent RNA polymerase catalyzes the transcription of DNA into RNA using the four ribonucleoside triphosphates as substrates. This is DNA-directed RNA polymerase subunit beta' from Lactobacillus acidophilus (strain ATCC 700396 / NCK56 / N2 / NCFM).